Reading from the N-terminus, the 131-residue chain is uncharacterized protein (131 aa).

This is an uncharacterized protein from Saccharomyces cerevisiae (strain ATCC 204508 / S288c) (Baker's yeast).